Consider the following 543-residue polypeptide: Chaperonin GroEL (543 aa).

ATP-binding positions include Thr-29–Pro-32, Asp-86–Thr-90, Gly-413, Asn-476–Ala-478, and Asp-492.

Belongs to the chaperonin (HSP60) family. As to quaternary structure, forms a cylinder of 14 subunits composed of two heptameric rings stacked back-to-back. Interacts with the co-chaperonin GroES.

Its subcellular location is the cytoplasm. It carries out the reaction ATP + H2O + a folded polypeptide = ADP + phosphate + an unfolded polypeptide.. In terms of biological role, together with its co-chaperonin GroES, plays an essential role in assisting protein folding. The GroEL-GroES system forms a nano-cage that allows encapsulation of the non-native substrate proteins and provides a physical environment optimized to promote and accelerate protein folding. The sequence is that of Chaperonin GroEL from Streptococcus pyogenes serotype M3 (strain SSI-1).